A 336-amino-acid polypeptide reads, in one-letter code: NADH-quinone oxidoreductase subunit H (336 aa).

Transmembrane regions (helical) follow at residues 4 to 24 (YILW…LVVA), 75 to 95 (YLFF…WAVI), 108 to 128 (LGLL…VIAG), 154 to 174 (MGFA…TGII), 181 to 201 (IWHW…IAGI), 233 to 253 (LFFL…SIMF), 272 to 292 (FVPG…MFLW), and 308 to 328 (LGWK…ACMV).

The protein belongs to the complex I subunit 1 family. In terms of assembly, NDH-1 is composed of 14 different subunits. Subunits NuoA, H, J, K, L, M, N constitute the membrane sector of the complex.

The protein resides in the cell inner membrane. It carries out the reaction a quinone + NADH + 5 H(+)(in) = a quinol + NAD(+) + 4 H(+)(out). Functionally, NDH-1 shuttles electrons from NADH, via FMN and iron-sulfur (Fe-S) centers, to quinones in the respiratory chain. The immediate electron acceptor for the enzyme in this species is believed to be ubiquinone. Couples the redox reaction to proton translocation (for every two electrons transferred, four hydrogen ions are translocated across the cytoplasmic membrane), and thus conserves the redox energy in a proton gradient. This subunit may bind ubiquinone. The protein is NADH-quinone oxidoreductase subunit H of Francisella tularensis subsp. mediasiatica (strain FSC147).